Consider the following 201-residue polypeptide: 3-isopropylmalate dehydratase small subunit (201 aa).

Belongs to the LeuD family. LeuD type 1 subfamily. In terms of assembly, heterodimer of LeuC and LeuD.

The enzyme catalyses (2R,3S)-3-isopropylmalate = (2S)-2-isopropylmalate. It functions in the pathway amino-acid biosynthesis; L-leucine biosynthesis; L-leucine from 3-methyl-2-oxobutanoate: step 2/4. Catalyzes the isomerization between 2-isopropylmalate and 3-isopropylmalate, via the formation of 2-isopropylmaleate. The polypeptide is 3-isopropylmalate dehydratase small subunit (Shewanella sp. (strain MR-4)).